Reading from the N-terminus, the 788-residue chain is Histidine--tRNA ligase, cytoplasmic (788 aa).

Residues 252–286 (PQACEENEAGSSTENPHASGEKPKGDKKSKKKKTL) are disordered.

Belongs to the class-II aminoacyl-tRNA synthetase family. Homodimer.

The enzyme catalyses tRNA(His) + L-histidine + ATP = L-histidyl-tRNA(His) + AMP + diphosphate + H(+). In Oryza sativa subsp. japonica (Rice), this protein is Histidine--tRNA ligase, cytoplasmic.